Consider the following 124-residue polypeptide: uncharacterized protein (124 aa).

As to quaternary structure, interacts with dil1.

This is an uncharacterized protein from Schizosaccharomyces pombe (strain 972 / ATCC 24843) (Fission yeast).